Here is a 1033-residue protein sequence, read N- to C-terminus: Complement receptor type 2 (1033 aa).

Positions 1-20 are cleaved as a signal peptide; sequence MGAAGLLGVFLALVAPGVLG. Sushi domains lie at 21 to 84, 89 to 148, 152 to 212, 213 to 273, 274 to 344, 349 to 408, 409 to 468, 469 to 524, 525 to 595, 600 to 659, 660 to 716, 717 to 781, 786 to 845, 849 to 909, and 910 to 970; these read ISCG…KCEY, SSCP…TCVS, LECP…TCEE, ARCK…VCEE, IFCP…RCEL, VQCP…VCEK, ECQA…QCKV, AACE…LCKE, ITCP…LCKL, VQCS…VCEK, ETCQ…LCKV, IHCH…QCLR, TRCP…TCIK, IGCP…HCKE, and VNCS…VCRS. Over 21–971 the chain is Extracellular; sequence ISCGSPPPIL…NPPLAVCRSR (951 aa). Disulfide bonds link C23–C65, C51–C82, C91–C132, C118–C146, C154–C197, C183–C210, C215–C256, C242–C271, C276–C325, C305–C342, C351–C393, C379–C406, C410–C453, C439–C466, C471–C509, C495–C522, C527–C576, C556–C593, C602–C644, C630–C657, C662–C699, C685–C714, C719–C762, C748–C779, C788–C830, C816–C843, C851–C894, and C880–C907. N-linked (GlcNAc...) asparagine glycosylation is found at N121 and N127. An N-linked (GlcNAc...) asparagine glycan is attached at N294. A glycan (N-linked (GlcNAc...) asparagine) is linked at N372. The N-linked (GlcNAc...) asparagine glycan is linked to N492. N-linked (GlcNAc...) asparagine glycosylation occurs at N623. N682 carries N-linked (GlcNAc...) asparagine glycosylation. N800, N823, and N861 each carry an N-linked (GlcNAc...) asparagine glycan. A glycan (N-linked (GlcNAc...) asparagine) is linked at N911. Cystine bridges form between C912–C955 and C941–C968. The helical transmembrane segment at 972-999 threads the bilayer; it reads SLAPVLCGIAAGLILLTFLIVITLYVIS. At 1000-1033 the chain is on the cytoplasmic side; the sequence is KHRARNYYTDTSQKEAFHLEAREVYSVDPYNPAS.

It belongs to the receptors of complement activation (RCA) family. As to quaternary structure, interacts (via Sushi domain 1 and 2) with C3. Interacts with CD19. Part of a complex composed of CD19, CR2/CD21, CD81 and IFITM1/CD225 in the membrane of mature B-cells. Interacts (via Sushi domain 1 and 2) with FCER2 (via the C-terminus). Interacts with CD23. Interacts with FCRL5. Interacts with CR1. Interacts with INFNA1. (Microbial infection) Interacts with Epstein-Barr virus gp350 protein. In terms of tissue distribution, mature B-lymphocytes, T-lymphocytes, pharyngeal epithelial cells, astrocytes and follicular dendritic cells of the spleen.

It is found in the cell membrane. Its function is as follows. Serves as a receptor for various ligands including complement component CD3d, HNRNPU OR IFNA1. When C3d is bound to antigens, attaches to C3d on B-cell surface and thereby facilitates the recognition and uptake of antigens by B-cells. This interaction enhances B-cell activation and subsequent immune responses. Forms a complex with several partners on the surface of B-cells including CD19, FCRL5 and CD81, to form the B-cell coreceptor complex that plays a crucial role in B-cell activation and signaling. Also induces specific intracellular signaling separately from the BCR and CD19 by activating the tyrosine kinase SRC, which then phosphorylates nucleolin/NCL and triggers AKT and GSK3 kinase activities in a SYK/CD19-independent manner. Acts as a ligand for CD23 (FcepsilonRII), a low-affinity receptor for IgE, which is expressed on B-cells and other immune cells, and thus participates in the regulation of IgE production. (Microbial infection) Acts as a receptor for Epstein-Barr virus. This chain is Complement receptor type 2 (CR2), found in Homo sapiens (Human).